The following is a 112-amino-acid chain: Cytochrome c 2.1 (112 aa).

The heme c site is built by cysteine 20, cysteine 23, histidine 24, and methionine 85.

It belongs to the cytochrome c family. Binds 1 heme c group covalently per subunit.

It is found in the mitochondrion intermembrane space. Electron carrier protein. The oxidized form of the cytochrome c heme group can accept an electron from the heme group of the cytochrome c1 subunit of cytochrome reductase. Cytochrome c then transfers this electron to the cytochrome oxidase complex, the final protein carrier in the mitochondrial electron-transport chain. The protein is Cytochrome c 2.1 of Caenorhabditis briggsae.